Here is a 185-residue protein sequence, read N- to C-terminus: Elongation factor P (185 aa).

Belongs to the elongation factor P family.

Its subcellular location is the cytoplasm. It participates in protein biosynthesis; polypeptide chain elongation. In terms of biological role, involved in peptide bond synthesis. Stimulates efficient translation and peptide-bond synthesis on native or reconstituted 70S ribosomes in vitro. Probably functions indirectly by altering the affinity of the ribosome for aminoacyl-tRNA, thus increasing their reactivity as acceptors for peptidyl transferase. The sequence is that of Elongation factor P from Anoxybacillus flavithermus (strain DSM 21510 / WK1).